A 519-amino-acid polypeptide reads, in one-letter code: Cyclic AMP-responsive element-binding protein 3-like protein 1 (519 aa).

A required for transcription activation region spans residues 1–60; it reads MDAVLEPFPADRLFPGSSFLDLGDLNESDFLNNAHFPEHLDHFVENMEDFSNDLFSSFFD. Over 1 to 376 the chain is Cytoplasmic; it reads MDAVLEPFPA…MAATQTGTCL (376 aa). A Glycyl lysine isopeptide (Lys-Gly) (interchain with G-Cter in SUMO2) cross-link involves residue Lys-184. The segment at 200–259 is disordered; sequence DLVQMPPTPPSSHGSDSDGSQSPRSLPPSSPVRPMARSSTAISTSPLLTAPHKLQGTSGP. Low complexity predominate over residues 210 to 223; it reads SSHGSDSDGSQSPR. Residues 236-246 show a composition bias toward polar residues; it reads RSSTAISTSPL. Residues 290–353 enclose the bZIP domain; sequence ALKRVRRKIK…RTLLQQLQKL (64 aa). The segment at 292–321 is basic motif; that stretch reads KRVRRKIKNKISAQESRRKKKEYVECLEKK. The segment at 332 to 353 is leucine-zipper; sequence LWKKVETLETANRTLLQQLQKL. The helical; Signal-anchor for type II membrane protein transmembrane segment at 377-397 threads the bilayer; it reads MVAALCFVLVLGSLVPCLPAF. The short motif at 392–395 is the S2P recognition element; the sequence is PCLP. The Lumenal portion of the chain corresponds to 398-519; that stretch reads SSGSMTVKED…LGPNTTIKLS (122 aa). The S1P recognition signature appears at 423–426; that stretch reads RSLL. The disordered stretch occupies residues 449-519; that stretch reads EGWELKPGGP…LGPNTTIKLS (71 aa). Residues 462-486 are compositionally biased toward basic and acidic residues; that stretch reads RPQDHLRHDRADSIHETTKYLRETW. 3 N-linked (GlcNAc...) asparagine glycosylation sites follow: Asn-493, Asn-498, and Asn-513.

This sequence belongs to the bZIP family. ATF subfamily. As to quaternary structure, interacts with SMAD4, the interaction takes place upon TGFB1 induction and SMAD4 acts as a CREB3L1 coactivator to induce the expression of genes involved in assembly of collagen extracellular matrix. Post-translationally, N-glycosylated. Ubiquitinated by HRD1/SYVN1; undergoes 'Lys-48'-linked ubiquitination, followed by rapid proteasomal degradation under normal conditions. Upon ER stress, SYVN1 E3 ubiquitin-protein ligase dissociates from its substrate, ubiquitination does not occur and CREB3L1 is stabilized. In terms of processing, upon ER stress or DNA damage, translocated to the Golgi apparatus, where it is processed by regulated intramembrane proteolysis (RIP) to release the cytosol-facing N-terminal transcription factor domain. The cleavage is performed sequentially by site-1 and site-2 proteases (S1P/MBTPS1 and S2P/MBTPS2). RIP is induced by TGFB1 and ceramide. In terms of tissue distribution, expressed in cortical and trabecular bones. Highly expressed in osteoblasts, but not detected in osteoclasts, nor in macrophages. Expressed at relatively low levels in lung and kidney. Weakly expressed in brain and spleen. Expressed in astrocytes.

It is found in the endoplasmic reticulum membrane. It localises to the nucleus. Functionally, precursor of the transcription factor form (Processed cyclic AMP-responsive element-binding protein 3-like protein 1), which is embedded in the endoplasmic reticulum membrane with N-terminal DNA-binding and transcription activation domains oriented toward the cytosolic face of the membrane. In response to ER stress or DNA damage, transported to the Golgi, where it is cleaved in a site-specific manner by resident proteases S1P/MBTPS1 and S2P/MBTPS2. The released N-terminal cytosolic domain is translocated to the nucleus where it activates transcription of specific target genes involved in the cell-cycle progression inhibition. In terms of biological role, transcription factor involved in cell type specific DNA damage and unfolded protein response (UPR). Binds the DNA consensus sequence 5'-GTGXGCXGC-3'. Plays a critical role in bone formation through the transcription of COL1A1, and possibly COL1A2, and the secretion of bone matrix proteins. Directly binds to the UPR element (UPRE)-like sequence in an osteoblast-specific COL1A1 promoter region and induces its transcription. Does not regulate COL1A1 in other tissues, such as skin. Required to protect astrocytes from ER stress-induced cell death. In astrocytes, binds to the cAMP response element (CRE) of the BiP/HSPA5 promoter and participate in its transcriptional activation. In astrocytes and osteoblasts, upon DNA damage, inhibits cell-cycle progression after G2/M phase by binding to promoters and activating transcription of genes encoding cell-cycle inhibitors, such as p21/CDKN1A. Required for TGFB1 to activate genes involved in the assembly of collagen extracellular matrix. This is Cyclic AMP-responsive element-binding protein 3-like protein 1 (Creb3l1) from Mus musculus (Mouse).